A 1755-amino-acid chain; its full sequence is Transposon Ty1-BL Gag-Pol polyprotein (1755 aa).

Composition is skewed to polar residues over residues 20–31, 46–55, and 137–168; these read SVTSKEVQTTQD, VSTQANSQQP, and VGTH…TNQH. Disordered stretches follow at residues 20–84, 137–173, and 350–420; these read SVTS…QNGP, VGTH…RPPP, and QQES…IRGS. The RNA-binding stretch occupies residues 299–401; sequence NNGIPINNKV…NSQSRTARAH (103 aa). The segment covering 363-372 has biased composition (basic and acidic residues); that stretch reads SPSDEKKDSR. A compositionally biased stretch (polar residues) spans 373 to 411; that stretch reads TYTNTTKPKSITRNSQKPNNSQSRTARAHNVSTFNNSPG. Asp461 serves as the catalytic For protease activity; shared with dimeric partner. The tract at residues 583 to 640 is integrase-type zinc finger-like; sequence NVHTSESTRKYPYPFIHRMLAHANAQTIRYSLKNNTITYFNESDVDWSSAIDYQCPDC. Residues 660–835 enclose the Integrase catalytic domain; sequence NSYEPFQYLH…AGLDISTLLP (176 aa). Residues Asp671 and Asp736 each coordinate Mg(2+). Residues 956–1172 form a disordered region; it reads SKAVSPTDST…LGGIGDSNAY (217 aa). Residues 960–969 show a composition bias toward low complexity; it reads SPTDSTPPST. 2 stretches are compositionally biased toward polar residues: residues 1005 to 1017 and 1031 to 1043; these read STPQ…STDS and MSQS…SYAS. The span at 1044-1053 shows a compositional bias: basic and acidic residues; it reads KSKDFRHSDS. 2 stretches are compositionally biased toward polar residues: residues 1054–1082 and 1095–1106; these read YSDN…QTSE and SIDTSSSESNSL. The short motif at 1178–1212 is the Bipartite nuclear localization signal element; it reads KKRSLEDNETEIKVSRDTWNTKNMRSLEPPRSKKR. The region spanning 1338–1476 is the Reverse transcriptase Ty1/copia-type domain; it reads NNYHITQLDI…DILGLEIKYQ (139 aa). Residues Asp1346, Asp1427, Asp1428, Asp1610, Glu1652, and Asp1685 each coordinate Mg(2+). Residues 1610-1752 enclose the RNase H Ty1/copia-type domain; the sequence is DASYGNQPYY…IKTFKLLTNK (143 aa).

The capsid protein forms a homotrimer, from which the VLPs are assembled. The protease is a homodimer, whose active site consists of two apposed aspartic acid residues. In terms of processing, initially, virus-like particles (VLPs) are composed of the structural unprocessed proteins Gag and Gag-Pol, and also contain the host initiator methionine tRNA (tRNA(i)-Met) which serves as a primer for minus-strand DNA synthesis, and a dimer of genomic Ty RNA. Processing of the polyproteins occurs within the particle and proceeds by an ordered pathway, called maturation. First, the protease (PR) is released by autocatalytic cleavage of the Gag-Pol polyprotein yielding capsid protein p45 and a Pol-p154 precursor protein. This cleavage is a prerequisite for subsequent processing of Pol-p154 at the remaining sites to release the mature structural and catalytic proteins. Maturation takes place prior to the RT reaction and is required to produce transposition-competent VLPs.

It is found in the cytoplasm. Its subcellular location is the nucleus. The catalysed reaction is DNA(n) + a 2'-deoxyribonucleoside 5'-triphosphate = DNA(n+1) + diphosphate. It carries out the reaction Endonucleolytic cleavage to 5'-phosphomonoester.. Its function is as follows. Capsid protein (CA) is the structural component of the virus-like particle (VLP), forming the shell that encapsulates the retrotransposons dimeric RNA genome. The particles are assembled from trimer-clustered units and there are holes in the capsid shells that allow for the diffusion of macromolecules. CA also has nucleocapsid-like chaperone activity, promoting primer tRNA(i)-Met annealing to the multipartite primer-binding site (PBS), dimerization of Ty1 RNA and initiation of reverse transcription. The aspartyl protease (PR) mediates the proteolytic cleavages of the Gag and Gag-Pol polyproteins after assembly of the VLP. In terms of biological role, reverse transcriptase/ribonuclease H (RT) is a multifunctional enzyme that catalyzes the conversion of the retro-elements RNA genome into dsDNA within the VLP. The enzyme displays a DNA polymerase activity that can copy either DNA or RNA templates, and a ribonuclease H (RNase H) activity that cleaves the RNA strand of RNA-DNA heteroduplexes during plus-strand synthesis and hydrolyzes RNA primers. The conversion leads to a linear dsDNA copy of the retrotransposon that includes long terminal repeats (LTRs) at both ends. Functionally, integrase (IN) targets the VLP to the nucleus, where a subparticle preintegration complex (PIC) containing at least integrase and the newly synthesized dsDNA copy of the retrotransposon must transit the nuclear membrane. Once in the nucleus, integrase performs the integration of the dsDNA into the host genome. The protein is Transposon Ty1-BL Gag-Pol polyprotein (TY1B-BL) of Saccharomyces cerevisiae (strain ATCC 204508 / S288c) (Baker's yeast).